A 304-amino-acid chain; its full sequence is D-alanine--D-alanine ligase (304 aa).

The 194-residue stretch at 107–300 folds into the ATP-grasp domain; it reads KRLWQGSGLP…FDELVARILG (194 aa). 134 to 186 serves as a coordination point for ATP; the sequence is VGYPVIVKPAREGSSLGMSRVEGPEELAEAYRVAAAYDDTVLAEAWVEGEEYT. 3 residues coordinate Mg(2+): aspartate 254, glutamate 267, and asparagine 269.

It belongs to the D-alanine--D-alanine ligase family. Requires Mg(2+) as cofactor. The cofactor is Mn(2+).

The protein localises to the cytoplasm. The enzyme catalyses 2 D-alanine + ATP = D-alanyl-D-alanine + ADP + phosphate + H(+). Its pathway is cell wall biogenesis; peptidoglycan biosynthesis. Its function is as follows. Cell wall formation. The protein is D-alanine--D-alanine ligase of Halorhodospira halophila (strain DSM 244 / SL1) (Ectothiorhodospira halophila (strain DSM 244 / SL1)).